Consider the following 647-residue polypeptide: Chaperone protein DnaK (647 aa).

A Phosphothreonine; by autocatalysis modification is found at threonine 198. The segment at 603-647 is disordered; that stretch reads EQAQGAGGAQGFDPNAFQGGDAGQQQKADDGVVDAEFTEVKDDKK. Low complexity predominate over residues 618–628; the sequence is AFQGGDAGQQQ.

It belongs to the heat shock protein 70 family.

Its function is as follows. Acts as a chaperone. The polypeptide is Chaperone protein DnaK (Acinetobacter baylyi (strain ATCC 33305 / BD413 / ADP1)).